The sequence spans 404 residues: Epoxide hydrolase 1 (404 aa).

The chain crosses the membrane as a helical span at residues I74–A96. In terms of domain architecture, AB hydrolase-1 spans P140–P389. The Nucleophile role is filled by D215. The active-site Proton donor is the Y327. The active-site Proton acceptor is H382.

It belongs to the AB hydrolase superfamily. Epoxide hydrolase family.

It localises to the membrane. The catalysed reaction is an epoxide + H2O = an ethanediol. The enzyme catalyses 8,9-epoxy-(5Z,11Z,14Z)-eicosatrienoate + H2O = 8,9-dihydroxy-(5Z,11Z,14Z)-eicosatrienoate. It catalyses the reaction 11,12-epoxy-(5Z,8Z,14Z)-eicosatrienoate + H2O = 11,12-dihydroxy-(5Z,8Z,14Z)-eicosatrienoate. It carries out the reaction 14,15-epoxy-(5Z,8Z,11Z)-eicosatrienoate + H2O = 14,15-dihydroxy-(5Z,8Z,11Z)-eicosatrienoate. The catalysed reaction is 12,13-epoxy-(9Z)-octadecenoate + H2O = 12,13-dihydroxy-(9Z)-octadecenoate. The enzyme catalyses 9,10-epoxy-(12Z)-octadecenoate + H2O = 9,10-dihydroxy-(12Z)-octadecenoate. The protein operates within lipid metabolism. Functionally, catalyzes the hydrolysis of epoxide-containing fatty acids. Active against epoxyeicosatrienoic acids (EETs) including 8,9-epoxy-(5Z,11Z,14Z)-eicosatrienoate (8,9-EET), 11,12-epoxy-(5Z,8Z,14Z)-eicosatrienoate (11,12-EET) and 14,15-epoxy-(5Z,8Z,11Z)-eicosatrienoate (14,15-EET) and the linoleic acid metabolites 12,13-epoxy-(9Z)-octadecenoate (12,13-EpOME) and 9,10-epoxy-(12Z)-octadecenoate (9,10-EpOME). These epoxides function as lipid signaling molecules, the enzyme can deplete the supply of the epoxide signal by transforming them into diol species that are more readily eliminated through excretion. This is Epoxide hydrolase 1 from Caenorhabditis elegans.